We begin with the raw amino-acid sequence, 215 residues long: Pyrrolidone-carboxylate peptidase (215 aa).

Catalysis depends on residues Glu78, Cys141, and His165.

This sequence belongs to the peptidase C15 family. In terms of assembly, homotetramer.

The protein resides in the cytoplasm. It catalyses the reaction Release of an N-terminal pyroglutamyl group from a polypeptide, the second amino acid generally not being Pro.. Removes 5-oxoproline from various penultimate amino acid residues except L-proline. This chain is Pyrrolidone-carboxylate peptidase, found in Streptococcus pyogenes serotype M3 (strain SSI-1).